The following is a 122-amino-acid chain: Large ribosomal subunit protein uL14 (122 aa).

Belongs to the universal ribosomal protein uL14 family. As to quaternary structure, part of the 50S ribosomal subunit. Forms a cluster with proteins L3 and L19. In the 70S ribosome, L14 and L19 interact and together make contacts with the 16S rRNA in bridges B5 and B8.

Binds to 23S rRNA. Forms part of two intersubunit bridges in the 70S ribosome. The sequence is that of Large ribosomal subunit protein uL14 from Frankia alni (strain DSM 45986 / CECT 9034 / ACN14a).